Here is a 341-residue protein sequence, read N- to C-terminus: Anthranilate phosphoribosyltransferase (341 aa).

5-phospho-alpha-D-ribose 1-diphosphate-binding positions include glycine 80, 83–84, threonine 88, 90–93, 108–116, and serine 120; these read GD, NIST, and KHGNYSVSS. Position 80 (glycine 80) interacts with anthranilate. Serine 92 is a binding site for Mg(2+). Asparagine 111 lines the anthranilate pocket. An anthranilate-binding site is contributed by arginine 166. Mg(2+)-binding residues include aspartate 224 and glutamate 225.

It belongs to the anthranilate phosphoribosyltransferase family. As to quaternary structure, homodimer. The cofactor is Mg(2+).

It carries out the reaction N-(5-phospho-beta-D-ribosyl)anthranilate + diphosphate = 5-phospho-alpha-D-ribose 1-diphosphate + anthranilate. Its pathway is amino-acid biosynthesis; L-tryptophan biosynthesis; L-tryptophan from chorismate: step 2/5. Catalyzes the transfer of the phosphoribosyl group of 5-phosphorylribose-1-pyrophosphate (PRPP) to anthranilate to yield N-(5'-phosphoribosyl)-anthranilate (PRA). The sequence is that of Anthranilate phosphoribosyltransferase from Haloquadratum walsbyi (strain DSM 16790 / HBSQ001).